The following is a 343-amino-acid chain: KRR1 small subunit processome component homolog (343 aa).

Positions 125-193 (DIIKIGNLVH…VRDIVVETMN (69 aa)) constitute a KH domain. Over residues 232–245 (NISKRKQPKVKKAK) the composition is skewed to basic residues. Residues 232–343 (NISKRKQPKV…KLLKANKKKV (112 aa)) form a disordered region. Residues 270-302 (FLNKEQKQAKRQQERSAKQADAAKRQDERRNKD) are a coiled coil. A compositionally biased stretch (basic and acidic residues) spans 271–302 (LNKEQKQAKRQQERSAKQADAAKRQDERRNKD). Residues 331-343 (LKAKLLKANKKKV) show a composition bias toward basic residues.

This sequence belongs to the KRR1 family. Monomer. Component of the ribosomal small subunit (SSU) processome.

It localises to the nucleus. The protein resides in the nucleolus. Required for 40S ribosome biogenesis. Involved in nucleolar processing of pre-18S ribosomal RNA and ribosome assembly. Binds to RNA. Required for female germline development, cell viability during eye development and for survival of dividing cells and epithelial cells during early wing disk development. In Drosophila ananassae (Fruit fly), this protein is KRR1 small subunit processome component homolog.